A 314-amino-acid chain; its full sequence is Nerylneryl diphosphate synthase CPT2, chloroplastic (314 aa).

The transit peptide at 1–61 (MNSSIVSQHF…MSDRGLSKIS (61 aa)) directs the protein to the chloroplast. Aspartate 97 is a catalytic residue.

Belongs to the UPP synthase family. Mg(2+) serves as cofactor. Expressed in stems. Expressed in petiolules. Expressed at low levels in leaf trichomes, old leaf and roots.

Its subcellular location is the plastid. The protein resides in the chloroplast. It catalyses the reaction 3 isopentenyl diphosphate + dimethylallyl diphosphate = nerylneryl diphosphate + 3 diphosphate. The enzyme catalyses isopentenyl diphosphate + dimethylallyl diphosphate = neryl diphosphate + diphosphate. It carries out the reaction neryl diphosphate + isopentenyl diphosphate = (2Z,6Z)-farnesyl diphosphate + diphosphate. The catalysed reaction is (2Z,6Z)-farnesyl diphosphate + isopentenyl diphosphate = nerylneryl diphosphate + diphosphate. Its function is as follows. Uses dimethylallyl diphosphate and isopentenyl diphosphate to catalyze the cis-prenyl chain elongation and produce the 20 carbon product nerylneryl diphosphate. The polypeptide is Nerylneryl diphosphate synthase CPT2, chloroplastic (Solanum lycopersicum (Tomato)).